A 267-amino-acid polypeptide reads, in one-letter code: Dolichol-phosphate mannosyltransferase (267 aa).

An N-acetylserine modification is found at S2. Topologically, residues 2-238 (SIEYSVIVPA…QQLKELYVFK (237 aa)) are cytoplasmic. Positions 10, 12, 14, 42, 44, 95, 96, 97, 99, and 122 each coordinate GDP-alpha-D-mannose. 2 residues coordinate Mg(2+): D97 and Q99. The Mn(2+) site is built by D97 and Q99. S141 is modified (phosphoserine; by PKA). Residues K183, R212, and K218 each coordinate GDP-alpha-D-mannose. The helical; Anchor for type IV membrane protein transmembrane segment at 239–259 (FGANNLILFITFWSILFFYVC) threads the bilayer. Over 260 to 267 (YQLYHLVF) the chain is Lumenal.

The protein belongs to the glycosyltransferase 2 family. As to quaternary structure, interacts with the C-terminus of SAC1, thereby sequestering it to the endoplasmic reticulum in exponentially growing cells. Under nutrient limitation conditions, this interaction is rapidly abolished. Requires Mg(2+) as cofactor. Mn(2+) is required as a cofactor. The cofactor is Ca(2+).

The protein resides in the endoplasmic reticulum membrane. The enzyme catalyses a di-trans,poly-cis-dolichyl phosphate + GDP-alpha-D-mannose = a di-trans,poly-cis-dolichyl beta-D-mannosyl phosphate + GDP. It functions in the pathway protein modification; protein glycosylation. With respect to regulation, inhibited by acetylsalicylic acid (aspirin). Functionally, transfers mannose from GDP-mannose to dolichol monophosphate to form dolichol phosphate mannose (Dol-P-Man) which is the mannosyl donor in pathways leading to N-glycosylation, glycosyl phosphatidylinositol membrane anchoring, and O-mannosylation of proteins. This chain is Dolichol-phosphate mannosyltransferase, found in Saccharomyces cerevisiae (strain ATCC 204508 / S288c) (Baker's yeast).